A 299-amino-acid chain; its full sequence is HTH-type transcriptional regulator ArgP (299 aa).

An HTH lysR-type domain is found at 2–58; that stretch reads FDYKLLSALAAVIEQAGFERAAQVLGLSQSAISQRIKLLEARVGQPVLVRVTPPAPT. Residues 19–38 constitute a DNA-binding region (H-T-H motif); the sequence is FERAAQVLGLSQSAISQRIK.

It belongs to the LysR transcriptional regulatory family. Homodimer.

Functionally, controls the transcription of genes involved in arginine and lysine metabolism. In Pseudomonas fluorescens (strain ATCC BAA-477 / NRRL B-23932 / Pf-5), this protein is HTH-type transcriptional regulator ArgP.